The following is a 209-amino-acid chain: NAD(P)H-quinone oxidoreductase subunit I (209 aa).

4Fe-4S ferredoxin-type domains are found at residues 55-84 (GRIH…VDYE) and 95-124 (NSYS…MTEE). Positions 64, 67, 70, 74, 104, 107, 110, and 114 each coordinate [4Fe-4S] cluster.

This sequence belongs to the complex I 23 kDa subunit family. NDH-1 is composed of at least 11 different subunits. [4Fe-4S] cluster serves as cofactor.

It is found in the cell inner membrane. The catalysed reaction is a plastoquinone + NADH + (n+1) H(+)(in) = a plastoquinol + NAD(+) + n H(+)(out). It catalyses the reaction a plastoquinone + NADPH + (n+1) H(+)(in) = a plastoquinol + NADP(+) + n H(+)(out). In terms of biological role, NDH-1 shuttles electrons from an unknown electron donor, via FMN and iron-sulfur (Fe-S) centers, to quinones in the respiratory and/or the photosynthetic chain. The immediate electron acceptor for the enzyme in this species is believed to be plastoquinone. Couples the redox reaction to proton translocation, and thus conserves the redox energy in a proton gradient. This chain is NAD(P)H-quinone oxidoreductase subunit I, found in Gloeobacter violaceus (strain ATCC 29082 / PCC 7421).